Consider the following 192-residue polypeptide: Thymidylate kinase (192 aa).

7–14 contacts ATP; the sequence is GIDCVGKS.

It belongs to the thymidylate kinase family.

The catalysed reaction is dTMP + ATP = dTDP + ADP. In terms of biological role, phosphorylation of dTMP to form dTDP in both de novo and salvage pathways of dTTP synthesis. This is Thymidylate kinase (tmk) from Campylobacter jejuni subsp. jejuni serotype O:2 (strain ATCC 700819 / NCTC 11168).